The sequence spans 183 residues: Adenine phosphoribosyltransferase (183 aa).

It belongs to the purine/pyrimidine phosphoribosyltransferase family. Homodimer.

Its subcellular location is the cytoplasm. The enzyme catalyses AMP + diphosphate = 5-phospho-alpha-D-ribose 1-diphosphate + adenine. Its pathway is purine metabolism; AMP biosynthesis via salvage pathway; AMP from adenine: step 1/1. Functionally, catalyzes a salvage reaction resulting in the formation of AMP, that is energically less costly than de novo synthesis. The polypeptide is Adenine phosphoribosyltransferase (Escherichia fergusonii (strain ATCC 35469 / DSM 13698 / CCUG 18766 / IAM 14443 / JCM 21226 / LMG 7866 / NBRC 102419 / NCTC 12128 / CDC 0568-73)).